The primary structure comprises 240 residues: UDP-2,3-diacylglucosamine hydrolase (240 aa).

Mn(2+) is bound by residues aspartate 8, histidine 10, aspartate 41, asparagine 79, and histidine 114. Residue 79–80 (NR) coordinates substrate. Substrate-binding residues include aspartate 122, serine 160, asparagine 164, lysine 167, and histidine 195. Mn(2+)-binding residues include histidine 195 and histidine 197.

The protein belongs to the LpxH family. Requires Mn(2+) as cofactor.

It localises to the cell inner membrane. The enzyme catalyses UDP-2-N,3-O-bis[(3R)-3-hydroxytetradecanoyl]-alpha-D-glucosamine + H2O = 2-N,3-O-bis[(3R)-3-hydroxytetradecanoyl]-alpha-D-glucosaminyl 1-phosphate + UMP + 2 H(+). It participates in glycolipid biosynthesis; lipid IV(A) biosynthesis; lipid IV(A) from (3R)-3-hydroxytetradecanoyl-[acyl-carrier-protein] and UDP-N-acetyl-alpha-D-glucosamine: step 4/6. In terms of biological role, hydrolyzes the pyrophosphate bond of UDP-2,3-diacylglucosamine to yield 2,3-diacylglucosamine 1-phosphate (lipid X) and UMP by catalyzing the attack of water at the alpha-P atom. Involved in the biosynthesis of lipid A, a phosphorylated glycolipid that anchors the lipopolysaccharide to the outer membrane of the cell. This Yersinia pestis bv. Antiqua (strain Angola) protein is UDP-2,3-diacylglucosamine hydrolase.